The following is a 287-amino-acid chain: MAASLWMGDLEPYMDENFISRAFATMGETVMSVKIIRNRLTGIPAGYCFVEFADLATAEKCLHKINGKPLPGATPAKRFKLNYATYGKQPDNSPEYSLFVGDLTPDVDDGMLYEFFVKVYPSCRGGKVVLDQTGVSKGYGFVKFTDELEQKRALTECQGAIGLGSKPVRLSVAIPKASRVKPVEYSQMYSYSYNQYYQQYQNYYAQWGYDQNTGSYSYSYPQYGYTQSTMQTYEEVGDDALEDPMPQLDVTEANKEFMEQSEELYDALMDCHWQPLDTVSSEIPAMM.

RRM domains follow at residues 3–86 (ASLW…YATY) and 96–175 (YSLF…VAIP).

This sequence belongs to the RRM TRSPAP family. In terms of assembly, component of the tRNA(Sec) complex composed at least of EEFSEC, SECISBP2, SEPHS1, SEPSECS, TRNAU1AP and tRNA(Sec). Found in a complex with tRNA(Sec). Interacts with SEPSECS. Associates with mRNP and/or polysomes. Found in a complex with EEFSEC, SECISBP2, TRNAU1AP and tRNA(Sec).

The protein resides in the nucleus. The protein localises to the cytoplasm. Involved in the early steps of selenocysteine biosynthesis and tRNA(Sec) charging to the later steps resulting in the cotranslational incorporation of selenocysteine into selenoproteins. Stabilizes the SECISBP2, EEFSEC and tRNA(Sec) complex. May be involved in the methylation of tRNA(Sec). Enhances efficiency of selenoproteins synthesis. The chain is tRNA selenocysteine 1-associated protein 1 (TRNAU1AP) from Bos taurus (Bovine).